The chain runs to 505 residues: Histidine ammonia-lyase (505 aa).

Positions 141-143 form a cross-link, 5-imidazolinone (Ala-Gly); sequence ASG. Serine 142 carries the 2,3-didehydroalanine (Ser) modification.

This sequence belongs to the PAL/histidase family. In terms of processing, contains an active site 4-methylidene-imidazol-5-one (MIO), which is formed autocatalytically by cyclization and dehydration of residues Ala-Ser-Gly.

The protein localises to the cytoplasm. The catalysed reaction is L-histidine = trans-urocanate + NH4(+). It functions in the pathway amino-acid degradation; L-histidine degradation into L-glutamate; N-formimidoyl-L-glutamate from L-histidine: step 1/3. The protein is Histidine ammonia-lyase of Bacillus cytotoxicus (strain DSM 22905 / CIP 110041 / 391-98 / NVH 391-98).